Here is a 490-residue protein sequence, read N- to C-terminus: Betaine aldehyde dehydrogenase (490 aa).

3 residues coordinate K(+): S26, I27, and D93. Residue 150 to 152 (GAW) participates in NAD(+) binding. Residue K162 is the Charge relay system of the active site. NAD(+)-binding positions include 176–179 (KPSE) and 230–233 (GVET). L246 contacts K(+). E252 acts as the Proton acceptor in catalysis. NAD(+)-binding residues include G254, C286, and E387. The active-site Nucleophile is the C286. At C286 the chain carries Cysteine sulfenic acid (-SOH). K(+)-binding residues include K457 and G460. The active-site Charge relay system is the E464.

This sequence belongs to the aldehyde dehydrogenase family. Dimer of dimers. The cofactor is K(+).

The enzyme catalyses betaine aldehyde + NAD(+) + H2O = glycine betaine + NADH + 2 H(+). It participates in amine and polyamine biosynthesis; betaine biosynthesis via choline pathway; betaine from betaine aldehyde: step 1/1. Its function is as follows. Involved in the biosynthesis of the osmoprotectant glycine betaine. Catalyzes the irreversible oxidation of betaine aldehyde to the corresponding acid. This chain is Betaine aldehyde dehydrogenase, found in Acinetobacter baumannii (strain ACICU).